The following is a 98-amino-acid chain: NADH-ubiquinone oxidoreductase chain 4L (98 aa).

3 consecutive transmembrane segments (helical) span residues 1–21, 29–49, and 61–81; these read MSMVYANIFLAFIMSLMGLLM, SLLCLEGMMLSLFVMMTVTIL, and IILLVFAACEAALGLSLLVMV.

It belongs to the complex I subunit 4L family. Core subunit of respiratory chain NADH dehydrogenase (Complex I) which is composed of 45 different subunits.

The protein resides in the mitochondrion inner membrane. The enzyme catalyses a ubiquinone + NADH + 5 H(+)(in) = a ubiquinol + NAD(+) + 4 H(+)(out). In terms of biological role, core subunit of the mitochondrial membrane respiratory chain NADH dehydrogenase (Complex I) which catalyzes electron transfer from NADH through the respiratory chain, using ubiquinone as an electron acceptor. Part of the enzyme membrane arm which is embedded in the lipid bilayer and involved in proton translocation. The protein is NADH-ubiquinone oxidoreductase chain 4L (MT-ND4L) of Phoca fasciata (Ribbon seal).